The following is a 189-amino-acid chain: Low affinity inorganic phosphate transporter 2 (189 aa).

The Cytoplasmic segment spans residues 1–55 (TARYTALVAKDAKRAAADMGKVLHVEIDPEDAKVERMAKDESNQFGLFSWEFVRR). Residues 56-76 (HGLHLFGTCSTWFLLDIAFYS) form a helical membrane-spanning segment. Topologically, residues 77–111 (QNLFQKDVFTAIGWIPPAKTMNAVQEVYKIARAQT) are extracellular. A helical membrane pass occupies residues 112 to 132 (LIALCSTVPGYWFTVAFIDII). Residues 133 to 134 (GR) are Cytoplasmic-facing. Residues 135 to 155 (FAIQLMGFFFMTVFMFAIAIP) form a helical membrane-spanning segment. The Extracellular segment spans residues 156-165 (YHHWTLQENR). The chain crosses the membrane as a helical span at residues 166–186 (IGFVIMYSLTFFFANFGPNAT). Residues 187–189 (TFV) are Cytoplasmic-facing.

The protein belongs to the major facilitator superfamily. Phosphate:H(+) symporter (TC 2.A.1.9) family.

The protein localises to the cell membrane. The enzyme catalyses phosphate(in) + H(+)(in) = phosphate(out) + H(+)(out). Functionally, low-affinity transporter for external inorganic phosphate (Pi). The polypeptide is Low affinity inorganic phosphate transporter 2 (Petunia hybrida (Petunia)).